The chain runs to 352 residues: Biotin synthase (352 aa).

The 219-residue stretch at 44-262 (NRVQVSTLLS…LAVARIMMPK (219 aa)) folds into the Radical SAM core domain. Positions 59, 63, and 66 each coordinate [4Fe-4S] cluster. [2Fe-2S] cluster contacts are provided by Cys-103, Cys-134, Cys-194, and Arg-266.

Belongs to the radical SAM superfamily. Biotin synthase family. Homodimer. It depends on [4Fe-4S] cluster as a cofactor. [2Fe-2S] cluster serves as cofactor.

It carries out the reaction (4R,5S)-dethiobiotin + (sulfur carrier)-SH + 2 reduced [2Fe-2S]-[ferredoxin] + 2 S-adenosyl-L-methionine = (sulfur carrier)-H + biotin + 2 5'-deoxyadenosine + 2 L-methionine + 2 oxidized [2Fe-2S]-[ferredoxin]. It participates in cofactor biosynthesis; biotin biosynthesis; biotin from 7,8-diaminononanoate: step 2/2. Catalyzes the conversion of dethiobiotin (DTB) to biotin by the insertion of a sulfur atom into dethiobiotin via a radical-based mechanism. This Pseudomonas aeruginosa (strain LESB58) protein is Biotin synthase.